A 166-amino-acid polypeptide reads, in one-letter code: Monodehydroascorbate reductase, fruit isozyme (166 aa).

The protein belongs to the FAD-dependent oxidoreductase family. The cofactor is FAD. In terms of processing, the N-terminus is blocked.

The enzyme catalyses 2 monodehydro-L-ascorbate radical + NADH + H(+) = 2 L-ascorbate + NAD(+). Its function is as follows. Catalyzes the conversion of monodehydroascorbate to ascorbate, oxidizing NADH in the process. In Cucumis sativus (Cucumber), this protein is Monodehydroascorbate reductase, fruit isozyme.